A 481-amino-acid polypeptide reads, in one-letter code: MHITKPHAAMFSSPGMGHVIPVIELGKRLSANNGFHVTVFVLETDAASAQSKFLNSTGVDIVKLPSPDIYGLVDPDDHVVTKIGVIMRAAVPALRSKIAAMHQKPTALIVDLFGTDALCLAKEFNMLSYVFIPTNARFLGVSIYYPNLDKDIKEEHTVQRNPLAIPGCEPVRFEDTLDAYLVPDEPVYRDFVRHGLAYPKADGILVNTWEEMEPKSLKSLLNPKLLGRVARVPVYPIGPLCRPIQSSETDHPVLDWLNEQPNESVLYISFGSGGCLSAKQLTELAWGLEQSQQRFVWVVRPPVDGSCCSEYVSANGGGTEDNTPEYLPEGFVSRTSDRGFVVPSWAPQAEILSHRAVGGFLTHCGWSSTLESVVGGVPMIAWPLFAEQNMNAALLSDELGIAVRLDDPKEDISRWKIEALVRKVMTEKEGEAMRRKVKKLRDSAEMSLSIDGGGLAHESLCRVTKECQRFLERVVDLSRGA.

His18 serves as the catalytic Proton acceptor. His18 serves as a coordination point for an anthocyanidin. Asp111 functions as the Charge relay in the catalytic mechanism. UDP-alpha-D-glucose-binding residues include Ala346, Gln348, His363, Trp366, Ser368, and Glu371. Ala386 serves as a coordination point for an anthocyanidin. Positions 387 and 388 each coordinate UDP-alpha-D-glucose.

This sequence belongs to the UDP-glycosyltransferase family. In terms of tissue distribution, expressed in seedlings and roots.

The enzyme catalyses (E)-4-coumarate + UDP-alpha-D-glucose = 4-O-(beta-D-glucosyl)-trans-4-coumarate + UDP + H(+). The catalysed reaction is (E)-coniferol + UDP-alpha-D-glucose = 4-O-(beta-D-glucosyl)-(E)-coniferol + UDP + H(+). It carries out the reaction (E)-sinapyl alcohol + UDP-alpha-D-glucose = 4-O-(beta-D-glucosyl)-trans-4-sinapoyl alcohol + UDP + H(+). It catalyses the reaction (E)-sinapate + UDP-alpha-D-glucose = 4-O-(beta-D-glucosyl)-trans-sinapate + UDP + H(+). The enzyme catalyses (E)-coniferaldehyde + UDP-alpha-D-glucose = 4-O-(beta-D-glucosyl)-4-(E)-coniferyl aldehyde + UDP + H(+). The catalysed reaction is (E)-sinapaldehyde + UDP-alpha-D-glucose = 4-O-(beta-D-glucosyl)-4-trans-sinapoyl aldehyde + UDP + H(+). Its function is as follows. Involved in the O-glucosylation of monolignols (alcohol monomers of lignin). Glucosylates coniferyl alcohol to form coniferyl alcohol 4-O-glucoside. Glucosylates sinapyl alcohol to form sinapyl alcohol 4-O-glucoside. Glucosylates coniferyl aldehyde to form coniferyl aldehyde 4-O-glucoside. Glucosylates sinapyl aldehyde to form sinapyl aldehyde 4-O-glucoside. Possesses low activity with sinapate and ferulate as substrates. The polypeptide is UDP-glycosyltransferase 72E2 (Arabidopsis thaliana (Mouse-ear cress)).